The chain runs to 61 residues: Probable tautomerase lin2709 (61 aa).

Pro-2 serves as the catalytic Proton acceptor; via imino nitrogen.

The protein belongs to the 4-oxalocrotonate tautomerase family.

This chain is Probable tautomerase lin2709, found in Listeria innocua serovar 6a (strain ATCC BAA-680 / CLIP 11262).